A 957-amino-acid polypeptide reads, in one-letter code: MTQTLSQLENSGAFIERHIGPDAAQQQEMLNAVGAQSLNALTGQIVPKDIQLATPPQVGAPATEYAALAELKAIASRNKRFTSYIGMGYTAVQLPPVILRNMLENPGWYTAYTPYQPEVSQGRLEALLNFQQVTLDLTGLDMASASLLDEATAAAEAMAMAKRVSKLKNANRFFVASDVHPQTLDVVRTRAETFGFEVIVDDAQKVLDHQDVFGVLLQQVGTTGEIHDYTALISELKSRKIVVSVAADIMALVLLTAPGKQGADIVFGSAQRFGVPMGYGGPHAAFFAAKDEYKRSMPGRIIGVSKDAAGNTALRMAMQTREQHIRREKANSNICTSQVLLANIASLYAVYHGPVGLKRIANRIHRLTDILAAGLQQKGLKLRHAHYFDTLCVEVADKAGVLARAEAAEINLRSDILNAVGITLDETTTRENVMQLFSVLLGDNHGLDIDTLDKDVAHDSRSIQAAMLRDDEILTHPVFNRYHSETEMMRYMHSLERKDLALNQAMIPLGSCTMKLNAAAEMIPITWPEFAELHPFCPPEQAEGYQQMIAQLADWLVKLTGYDAVCMQPNSGAQGEYAGLLAIRHYHESRNEGHRDICLIPASAHGTNPASAHMSGMQVVVVACDKNGNIDLTDLRAKAEQAGDNLSCIMVTYPSTHGVYEETIREVCEVVHQFGGQVYLDGANMNAQVGITSPGFIGADVSHLNLHKTFCIPHGGGGPGMGPIGVKAHLAPFVPGHSVVQIEGMLTRQGAVSAAPFGSASILPISWMYIRMMGAEGLKKASQVAILNANYIASRLQDAFPVLYTGRDGRVAHECILDIRPLKEETGISELDIAKRLIDYGFHAPTMSFPVAGTLMVEPTESESKVELDRFIDAMLAIRAEIDQVKAGVWPLEDNPLVNAPHIQSELVAEWAHPYSREVAVFPAGVADKYWPTVKRLDDVYGDRNLFCSCVPISEYQ.

At Lys708 the chain carries N6-(pyridoxal phosphate)lysine.

It belongs to the GcvP family. In terms of assembly, the glycine cleavage system is composed of four proteins: P, T, L and H. Requires pyridoxal 5'-phosphate as cofactor.

It catalyses the reaction N(6)-[(R)-lipoyl]-L-lysyl-[glycine-cleavage complex H protein] + glycine + H(+) = N(6)-[(R)-S(8)-aminomethyldihydrolipoyl]-L-lysyl-[glycine-cleavage complex H protein] + CO2. Functionally, the glycine cleavage system catalyzes the degradation of glycine. The P protein binds the alpha-amino group of glycine through its pyridoxal phosphate cofactor; CO(2) is released and the remaining methylamine moiety is then transferred to the lipoamide cofactor of the H protein. The protein is Glycine dehydrogenase (decarboxylating) of Escherichia coli O6:H1 (strain CFT073 / ATCC 700928 / UPEC).